We begin with the raw amino-acid sequence, 187 residues long: Urease accessory protein UreE (187 aa).

Positions 154-187 (RANSAQGHGHSHGHSHSHDHHGYHHHGDGNWHKH) are disordered. Residues 162 to 177 (GHSHGHSHSHDHHGYH) show a composition bias toward basic residues. The segment covering 178 to 187 (HHGDGNWHKH) has biased composition (basic and acidic residues).

It belongs to the UreE family.

It localises to the cytoplasm. Functionally, involved in urease metallocenter assembly. Binds nickel. Probably functions as a nickel donor during metallocenter assembly. This Actinobacillus pleuropneumoniae (Haemophilus pleuropneumoniae) protein is Urease accessory protein UreE.